We begin with the raw amino-acid sequence, 342 residues long: MSINIEQAIIHEISQDSQGQLRCRLRPQPLLNSQAVEMMLEELHQTYTSKSGKGFGYFGIHGDDGEANPAFSNALQEYRAGDLGFVEFTGQASKLLQEELAKYDFSQGGFLLMSCYTSMASDFLFVALLSAKSSMTVLDDMELSQNNHLDLSNIQLAARIDLTEWQADKDSRKYISFIRGRAGRKVADFFLDFMGCVEGVNTKAQNKTLMNAVEDFVASSDLTKEERQQCRNKVFEYCSERFDEGADIEIKDLADELADQGMESFYDFARGGCYELDEEFPADKSTLRQLKKFSGTGGGVTISFDGGHLGQRVIYDPISDTLLIKGVPANLKDQLDRRLKGE.

Belongs to the YejK family.

Its subcellular location is the cytoplasm. The protein localises to the nucleoid. This chain is Nucleoid-associated protein Shewmr7_2293, found in Shewanella sp. (strain MR-7).